Here is a 246-residue protein sequence, read N- to C-terminus: Sortase B (246 aa).

A helical membrane pass occupies residues 5-24 (SFLGKSLTLVVLGVFLFSGW).

Belongs to the bacterial sortase family. Class B subfamily.

The protein localises to the cell membrane. Transpeptidase that anchors surface proteins to the cell wall. Recognizes and modifies its substrate by proteolytic cleavage of a C-terminal sorting signal. Following cleavage, a covalent intermediate is formed via a thioester bond between the sortase and its substrate, which is then transferred and covalently attached to the cell wall. Catalyzes a cell wall sorting reaction in which a surface protein with the consensus sorting signal NP(Q/K)(T/S)(N/G/S)(D/A) is cleaved between the fourth and fifth residues, and the fourth position is linked to the cell wall. This is not the major sortase in Listeria, it seems to anchor only 2 proteins, Hbp2 (SvpA) and Hbp1. This is Sortase B from Listeria monocytogenes serovar 1/2a (strain ATCC BAA-679 / EGD-e).